Here is a 114-residue protein sequence, read N- to C-terminus: Nucleoid-associated protein CKL_3826 (114 aa).

It belongs to the YbaB/EbfC family. In terms of assembly, homodimer.

The protein resides in the cytoplasm. Its subcellular location is the nucleoid. Its function is as follows. Binds to DNA and alters its conformation. May be involved in regulation of gene expression, nucleoid organization and DNA protection. In Clostridium kluyveri (strain ATCC 8527 / DSM 555 / NBRC 12016 / NCIMB 10680 / K1), this protein is Nucleoid-associated protein CKL_3826.